Here is a 477-residue protein sequence, read N- to C-terminus: uncharacterized protein (477 aa).

12 helical membrane-spanning segments follow: residues 31 to 51, 60 to 80, 103 to 123, 130 to 150, 177 to 197, 205 to 225, 248 to 268, 291 to 311, 334 to 354, 359 to 379, 384 to 404, and 433 to 453; these read LLRL…LLGT, LGVP…VAPF, LWFG…SLIL, MGPA…AGVG, LLYV…GWLL, LIRV…IALW, AWGL…VMVG, VGQT…GFIW, IVAF…LFFA, IGLG…MVVV, GIAL…AVFI, and VVYV…GPLV.

This sequence belongs to the PucC family.

Its subcellular location is the cell membrane. This is an uncharacterized protein from Rhodobacter capsulatus (Rhodopseudomonas capsulata).